A 311-amino-acid polypeptide reads, in one-letter code: HPr kinase/phosphorylase (311 aa).

Catalysis depends on residues H139 and K160. 154–161 contributes to the ATP binding site; sequence GDSGVGKS. S161 provides a ligand contact to Mg(2+). D178 (proton acceptor; for phosphorylation activity. Proton donor; for dephosphorylation activity) is an active-site residue. Residues 202 to 211 form an important for the catalytic mechanism of both phosphorylation and dephosphorylation region; that stretch reads LEIRGIGIID. E203 is a Mg(2+) binding site. The active site involves R244. An important for the catalytic mechanism of dephosphorylation region spans residues 265-270; the sequence is PVKTGR.

It belongs to the HPrK/P family. As to quaternary structure, homohexamer. It depends on Mg(2+) as a cofactor.

The catalysed reaction is [HPr protein]-L-serine + ATP = [HPr protein]-O-phospho-L-serine + ADP + H(+). The enzyme catalyses [HPr protein]-O-phospho-L-serine + phosphate + H(+) = [HPr protein]-L-serine + diphosphate. Catalyzes the ATP- as well as the pyrophosphate-dependent phosphorylation of a specific serine residue in HPr, a phosphocarrier protein of the phosphoenolpyruvate-dependent sugar phosphotransferase system (PTS). HprK/P also catalyzes the pyrophosphate-producing, inorganic phosphate-dependent dephosphorylation (phosphorolysis) of seryl-phosphorylated HPr (P-Ser-HPr). The two antagonistic activities of HprK/P are regulated by several intracellular metabolites, which change their concentration in response to the absence or presence of rapidly metabolisable carbon sources (glucose, fructose, etc.) in the growth medium. Therefore, by controlling the phosphorylation state of HPr, HPrK/P is a sensor enzyme that plays a major role in the regulation of carbon metabolism and sugar transport: it mediates carbon catabolite repression (CCR), and regulates PTS-catalyzed carbohydrate uptake and inducer exclusion. This chain is HPr kinase/phosphorylase, found in Levilactobacillus brevis (strain ATCC 367 / BCRC 12310 / CIP 105137 / JCM 1170 / LMG 11437 / NCIMB 947 / NCTC 947) (Lactobacillus brevis).